Reading from the N-terminus, the 216-residue chain is Neurotrophic factor BDNF precursor form (216 aa).

Residues 1–108 (PMKEVSIRGQ…AANMSMRVRR (108 aa)) constitute a propeptide that is removed on maturation. Asn101 is a glycosylation site (N-linked (GlcNAc...) asparagine). Cys121 and Cys188 form a disulfide bridge.

It belongs to the NGF-beta family.

The protein resides in the secreted. Promotes the survival of neuronal populations that are all located either in the central nervous system or directly connected to it. This is Neurotrophic factor BDNF precursor form (BDNF) from Cylindrophis ruffus (Red-tailed pipe snake).